A 77-amino-acid polypeptide reads, in one-letter code: Cold shock protein YdfK (77 aa).

This sequence to E.coli YnaE.

The sequence is that of Cold shock protein YdfK (ydfK) from Escherichia coli (strain K12).